Reading from the N-terminus, the 312-residue chain is Porphobilinogen deaminase (312 aa).

Cysteine 241 bears the S-(dipyrrolylmethanemethyl)cysteine mark.

This sequence belongs to the HMBS family. As to quaternary structure, monomer. Dipyrromethane serves as cofactor.

The enzyme catalyses 4 porphobilinogen + H2O = hydroxymethylbilane + 4 NH4(+). Its pathway is porphyrin-containing compound metabolism; protoporphyrin-IX biosynthesis; coproporphyrinogen-III from 5-aminolevulinate: step 2/4. In terms of biological role, tetrapolymerization of the monopyrrole PBG into the hydroxymethylbilane pre-uroporphyrinogen in several discrete steps. This chain is Porphobilinogen deaminase, found in Aliarcobacter butzleri (strain RM4018) (Arcobacter butzleri).